Here is a 117-residue protein sequence, read N- to C-terminus: Ig heavy chain V region 5-76 (117 aa).

A signal peptide spans 1 to 19; the sequence is MNFVLSLIFLALILKGVQC. The interval 20-49 is framework-1; sequence EVHLVESGGGLVKPGGSLKLSCVVSGFTFN. The cysteines at positions 41 and 115 are disulfide-linked. Residues 50 to 54 form a complementarity-determining-1 region; that stretch reads KYAMS. Residues 55–68 form a framework-2 region; sequence WVRQTPEKRLEWVA. Residues 69 to 85 are complementarity-determining-2; the sequence is TISSGGLYTYYPDSVKG. A framework-3 region spans residues 86 to 117; the sequence is RFTISRDNAGNTLYLQMSSLRSEDTAMYYCAR.

This chain is Ig heavy chain V region 5-76, found in Mus musculus (Mouse).